We begin with the raw amino-acid sequence, 247 residues long: TM2 domain-containing protein 3 (247 aa).

The N-terminal stretch at 1–25 is a signal peptide; it reads MIPMMTLKRVCRVLLFITQMYVLSG. Topologically, residues 26-179 are extracellular; the sequence is RGFLSFEYSE…RTFPKMLYCN (154 aa). N-linked (GlcNAc...) asparagine glycosylation is found at N87, N99, N139, N155, N169, and N179. Residues 180-200 traverse the membrane as a helical segment; sequence WTGGYKWSTALALSITLGGFG. A TM2 domain is found at 183 to 231; sequence GYKWSTALALSITLGGFGADRFYLGQWREGLGKLFSFGGLGIWTLIDVF. Topologically, residues 201 to 215 are cytoplasmic; that stretch reads ADRFYLGQWREGLGK. Residues 216–236 traverse the membrane as a helical segment; the sequence is LFSFGGLGIWTLIDVFLISVG. The Extracellular portion of the chain corresponds to 237 to 247; sequence YVGPADGSLYI.

The protein belongs to the TM2 family.

Its subcellular location is the membrane. This chain is TM2 domain-containing protein 3 (tm2d3), found in Xenopus tropicalis (Western clawed frog).